A 209-amino-acid polypeptide reads, in one-letter code: Molybdenum cofactor guanylyltransferase (209 aa).

Residues 14 to 16 (LAG), K31, and D104 contribute to the GTP site. D104 provides a ligand contact to Mg(2+).

This sequence belongs to the MobA family. In terms of assembly, monomer. It depends on Mg(2+) as a cofactor.

The protein resides in the cytoplasm. It catalyses the reaction Mo-molybdopterin + GTP + H(+) = Mo-molybdopterin guanine dinucleotide + diphosphate. In terms of biological role, transfers a GMP moiety from GTP to Mo-molybdopterin (Mo-MPT) cofactor (Moco or molybdenum cofactor) to form Mo-molybdopterin guanine dinucleotide (Mo-MGD) cofactor. This Helicobacter pylori (strain J99 / ATCC 700824) (Campylobacter pylori J99) protein is Molybdenum cofactor guanylyltransferase.